A 1549-amino-acid polypeptide reads, in one-letter code: Structural maintenance of chromosomes protein 4 (1549 aa).

Residues 1–78 are disordered; sequence MPPKTSAAPP…LFSLQLPSRP (78 aa). A compositionally biased stretch (basic residues) spans 26 to 36; that stretch reads KPQKKTTKPVN. Residues 37–59 are compositionally biased toward basic and acidic residues; it reads RHKEGSKDPEEELQRAVNEKFDG. ATP is bound at residue 121–128; sequence GPNGSGKS. The stretch at 326–604 forms a coiled coil; the sequence is MKLEQRRRQR…QNSSCSSSNK (279 aa). 2 stretches are compositionally biased toward basic and acidic residues: residues 396–407 and 420–444; these read LSDLGTEETRRK and AEAEKEKEVKKRSNLEAAPEKAERK. Disordered regions lie at residues 396–444 and 460–485; these read LSDL…AERK and KTANEEADKNLDEFEKRSEAPKEEQK. Positions 619–734 constitute an SMC hinge domain; the sequence is KSFHGRLGDL…GDSTQEAQRM (116 aa). Coiled-coil stretches lie at residues 786–1058 and 1144–1182; these read KAAE…KVNR and EKINEISSRDAEEMQMKLKVCEQQVEALKAKVDISSIKA. The segment covering 1440–1459 has biased composition (polar residues); it reads IQTTRDVTSRPQSKATTSGD. The interval 1440 to 1549 is disordered; sequence IQTTRDVTSR…AIVDDDDDME (110 aa). The span at 1460 to 1474 shows a compositional bias: basic and acidic residues; it reads GTERPASRSASRPES. The span at 1510 to 1523 shows a compositional bias: polar residues; it reads TPPSKRSNSASTPK.

It belongs to the SMC family. SMC4 subfamily. As to quaternary structure, component of the condensin I complex, which contains the mix-1/SMC2 and smc-4/SMC4 heterodimer, and three non SMC subunits that probably regulate the complex: dpy-26, capg-1 and dpy-28. Within the complex, interacts with mix-1, dpy-26, capg-1 and dpy-28. Component of the condensin II complex, which contains the mix-1/SMC2 and smc-4/SMC4 heterodimer, and three non SMC subunits, kle-2, capg-2 and hcp-6 that probably regulate the complex. Within the complex, interacts with mix-1, kle-2, capg-2 and hcp-6. Interacts with smcl-1.

The protein localises to the nucleus. The protein resides in the chromosome. Its function is as follows. Central component of the condensin I complex, a complex required for conversion of interphase chromatin into mitotic-like condense chromosomes. The condensin I complex introduces positive supercoils into relaxed DNA in the presence of type I topoisomerases. Converts nicked DNA into positive knotted forms in the presence of type II topoisomerases. Also a central component of the condensin II complex, a complex that seems to play a role in prophase chromosome condensation. Both the condensin complex I and II play a role in meiotic and mitotic chromosome segregation. Plays a role in robust cytokinesis upon the presence of chromatin obstructions. This Caenorhabditis elegans protein is Structural maintenance of chromosomes protein 4 (smc-4).